The primary structure comprises 122 residues: Basic phospholipase A2 Ts-G6D49 (122 aa).

7 cysteine pairs are disulfide-bonded: Cys26–Cys115, Cys28–Cys44, Cys43–Cys95, Cys49–Cys122, Cys50–Cys88, Cys57–Cys81, and Cys75–Cys86. The Ca(2+) site is built by Tyr27, Gly29, and Gly31. His47 is a catalytic residue. Asp48 is a Ca(2+) binding site. Asp89 is a catalytic residue.

It depends on Ca(2+) as a cofactor. In terms of tissue distribution, expressed by the venom gland.

The protein resides in the secreted. It catalyses the reaction a 1,2-diacyl-sn-glycero-3-phosphocholine + H2O = a 1-acyl-sn-glycero-3-phosphocholine + a fatty acid + H(+). Its function is as follows. Snake venom phospholipase A2 that induces fast and sustaining local edema a few hours after injection (5-10 ug) in the hind paw, and prolongs the coagulation time of human plasma. Exhibits moderate hydrolytic activities and prefers the zwitterionic micelles (dPPC with Triton X-100) to the anionic micelles (dPPC with deoxycholate). PLA2 catalyzes the calcium-dependent hydrolysis of the 2-acyl groups in 3-sn-phosphoglycerides. The sequence is that of Basic phospholipase A2 Ts-G6D49 from Trimeresurus stejnegeri (Chinese green tree viper).